The following is a 254-amino-acid chain: Mamu class II histocompatibility antigen, DR alpha chain (254 aa).

Positions 1-25 (MAESGVPVLGFFIIAVLMSAQESWA) are cleaved as a signal peptide. The alpha-1 stretch occupies residues 26-109 (IKEEHVIIQA…KRSNNTPITN (84 aa)). At 26–216 (IKEEHVIIQA…APSPLPETTE (191 aa)) the chain is on the extracellular side. A glycan (N-linked (GlcNAc...) asparagine) is linked at Asn-103. Residues 110 to 203 (VPPEVTVLTN…CLDAPLLKHW (94 aa)) are alpha-2. An Ig-like C1-type domain is found at 112–204 (PEVTVLTNSP…LDAPLLKHWE (93 aa)). A disulfide bridge links Cys-132 with Cys-188. Residues 204-216 (EFDAPSPLPETTE) are connecting peptide. A helical membrane pass occupies residues 217–239 (NVVCALGLIVGLVGIIVGTVFII). Over 240-254 (KGVRKSNAAERRGPL) the chain is Cytoplasmic. A Glycyl lysine isopeptide (Lys-Gly) (interchain with G-Cter in ubiquitin) cross-link involves residue Lys-244.

Belongs to the MHC class II family. In terms of assembly, heterodimer of an alpha chain and a beta chain.

The protein resides in the membrane. This chain is Mamu class II histocompatibility antigen, DR alpha chain (Mamu-DRA), found in Macaca mulatta (Rhesus macaque).